The chain runs to 401 residues: F-box protein At1g69090 (401 aa).

Residues 1 to 23 (MASPTLALAQSPPPKSPAVSVSQ) form a disordered region. The 48-residue stretch at 27-74 (HCWSKLPLDLMQLVFERLAFLDFERAKSVCSSWQFGSKQSKPNNQIPW) folds into the F-box domain.

The sequence is that of F-box protein At1g69090 from Arabidopsis thaliana (Mouse-ear cress).